Reading from the N-terminus, the 461-residue chain is ATP-dependent protease ATPase subunit HslU (461 aa).

ATP-binding positions include I18, G60–E65, D274, E339, and R411.

The protein belongs to the ClpX chaperone family. HslU subfamily. A double ring-shaped homohexamer of HslV is capped on each side by a ring-shaped HslU homohexamer. The assembly of the HslU/HslV complex is dependent on binding of ATP.

Its subcellular location is the cytoplasm. Its function is as follows. ATPase subunit of a proteasome-like degradation complex; this subunit has chaperone activity. The binding of ATP and its subsequent hydrolysis by HslU are essential for unfolding of protein substrates subsequently hydrolyzed by HslV. HslU recognizes the N-terminal part of its protein substrates and unfolds these before they are guided to HslV for hydrolysis. The chain is ATP-dependent protease ATPase subunit HslU from Carboxydothermus hydrogenoformans (strain ATCC BAA-161 / DSM 6008 / Z-2901).